A 296-amino-acid polypeptide reads, in one-letter code: 4-hydroxy-tetrahydrodipicolinate synthase (296 aa).

Position 47 (threonine 47) interacts with pyruvate. The Proton donor/acceptor role is filled by tyrosine 136. Lysine 164 serves as the catalytic Schiff-base intermediate with substrate. Position 206 (valine 206) interacts with pyruvate.

This sequence belongs to the DapA family. In terms of assembly, homotetramer; dimer of dimers.

The protein resides in the cytoplasm. It catalyses the reaction L-aspartate 4-semialdehyde + pyruvate = (2S,4S)-4-hydroxy-2,3,4,5-tetrahydrodipicolinate + H2O + H(+). It participates in amino-acid biosynthesis; L-lysine biosynthesis via DAP pathway; (S)-tetrahydrodipicolinate from L-aspartate: step 3/4. Catalyzes the condensation of (S)-aspartate-beta-semialdehyde [(S)-ASA] and pyruvate to 4-hydroxy-tetrahydrodipicolinate (HTPA). This Thermosynechococcus vestitus (strain NIES-2133 / IAM M-273 / BP-1) protein is 4-hydroxy-tetrahydrodipicolinate synthase.